A 259-amino-acid chain; its full sequence is Putative carbamate hydrolase RutD (259 aa).

It belongs to the AB hydrolase superfamily. Hydrolase RutD family.

The catalysed reaction is carbamate + 2 H(+) = NH4(+) + CO2. Its function is as follows. Involved in pyrimidine catabolism. May facilitate the hydrolysis of carbamate, a reaction that can also occur spontaneously. This chain is Putative carbamate hydrolase RutD, found in Pseudomonas savastanoi pv. phaseolicola (strain 1448A / Race 6) (Pseudomonas syringae pv. phaseolicola (strain 1448A / Race 6)).